Here is a 410-residue protein sequence, read N- to C-terminus: Chloroacetanilide N-alkylformylase, ferredoxin reductase component (410 aa).

7 residues coordinate FAD: Gly-14, Asp-36, Lys-49, Val-82, Arg-130, Asp-279, and Val-298.

It belongs to the FAD-dependent oxidoreductase family. The chloroacetanilide N-alkylformylase multicomponent enzyme system is composed of an oxygenase component (CndA) and an electron transfer component formed by a ferredoxin reductase (CndC1) and a ferredoxin (CndB1). In vitro, chloroacetanilide N-alkylformylase assays in which CndB1 is substituted for CndB2 demonstrate that the two enzymes possess nearly identical activities. The cofactor is FAD.

The enzyme catalyses 2 reduced [2Fe-2S]-[ferredoxin] + NAD(+) + H(+) = 2 oxidized [2Fe-2S]-[ferredoxin] + NADH. In terms of biological role, component of the chloroacetanilide N-alkylformylase multicomponent enzyme system involved in the degradation of chloroacetanilide herbicides (N-alkoxyalkyl-N-chloroacetyl-substituted aniline derivatives). In vitro, catalyzes the transfers of electrons from ferredoxin (CndB1) to NADH. N-dealkylase utilizes NADH, but not NADPH, as the electron donor. The polypeptide is Chloroacetanilide N-alkylformylase, ferredoxin reductase component (Rhizorhabdus wittichii (strain DC-6 / KACC 16600) (Sphingomonas wittichii)).